A 1048-amino-acid polypeptide reads, in one-letter code: Selenate reductase subunit A (1048 aa).

Residues 1-39 (MENQHQKFISRRNFIKTSALLGGTAFLGTGLPNIKKTYS) constitute a signal peptide (tat-type signal). Residues 56 to 129 (ENILYSACLQ…AGIQHAYDPY (74 aa)) enclose the 4Fe-4S Mo/W bis-MGD-type domain. [4Fe-4S] cluster-binding residues include Cys63, Cys66, Cys70, and Cys115. A Mo-bis(molybdopterin guanine dinucleotide)-binding site is contributed by Cys270.

It belongs to the prokaryotic molybdopterin-containing oxidoreductase family. In terms of assembly, the complex is composed of three subunits: SrdA, SrdB and SrdC. [4Fe-4S] cluster serves as cofactor. It depends on Mo-bis(molybdopterin guanine dinucleotide) as a cofactor. Predicted to be exported by the Tat system. The position of the signal peptide cleavage has not been experimentally proven.

The protein resides in the secreted. The catalysed reaction is selenite + a quinone + H2O = selenate + a quinol. Functionally, component of the respiratory selenate reductase complex, which catalyzes the reduction of selenate to selenite. SrdA is probably the catalytic subunit that reduces selenate. The protein is Selenate reductase subunit A of Mesobacillus selenatarsenatis (strain DSM 18680 / JCM 14380 / FERM P-15431 / SF-1).